The primary structure comprises 111 residues: Nucleoid-associated protein glr3498 (111 aa).

It belongs to the YbaB/EbfC family. As to quaternary structure, homodimer.

The protein localises to the cytoplasm. Its subcellular location is the nucleoid. In terms of biological role, binds to DNA and alters its conformation. May be involved in regulation of gene expression, nucleoid organization and DNA protection. The sequence is that of Nucleoid-associated protein glr3498 from Gloeobacter violaceus (strain ATCC 29082 / PCC 7421).